The primary structure comprises 293 residues: Elongation factor Ts (293 aa).

Residues 81–84 (TDFV) are involved in Mg(2+) ion dislocation from EF-Tu.

This sequence belongs to the EF-Ts family.

The protein resides in the cytoplasm. Its function is as follows. Associates with the EF-Tu.GDP complex and induces the exchange of GDP to GTP. It remains bound to the aminoacyl-tRNA.EF-Tu.GTP complex up to the GTP hydrolysis stage on the ribosome. The protein is Elongation factor Ts of Methylococcus capsulatus (strain ATCC 33009 / NCIMB 11132 / Bath).